The sequence spans 315 residues: MKANYSAEERFLLLGFSDWPSLQPVLFALVLLCYLLTLTGNSALVLLAVRDPRLHTPMYYFLCHLALVDAGFTTSVVPPLLANLRGPALWLPRSHCTAQLCASLALGSAECVLLAVMALDRAAAVCRPLRYAGLVSPRLCRTLASASWLSGLTNSVAQTALLAERPLCAPRLLDHFICELPALLKLACGGDGDTTENQMFAARVVILLLPFAVILASYGAVARAVCCMRFSGGRRRAVGTCGSHLTAVCLFYGSAIYTYLQPAQRYNQARGKFVSLFYTVVTPALNPLIYTLRNKKVKGAARRLLRSLGRGQAGQ.

The Extracellular segment spans residues 1-24 (MKANYSAEERFLLLGFSDWPSLQP). A helical membrane pass occupies residues 25-48 (VLFALVLLCYLLTLTGNSALVLLA). The Cytoplasmic segment spans residues 49 to 56 (VRDPRLHT). A helical transmembrane segment spans residues 57-78 (PMYYFLCHLALVDAGFTTSVVP). The Extracellular portion of the chain corresponds to 79 to 99 (PLLANLRGPALWLPRSHCTAQ). The cysteines at positions 96 and 188 are disulfide-linked. A helical membrane pass occupies residues 100–119 (LCASLALGSAECVLLAVMAL). Residues 120–138 (DRAAAVCRPLRYAGLVSPR) lie on the Cytoplasmic side of the membrane. A helical membrane pass occupies residues 139–157 (LCRTLASASWLSGLTNSVA). Residues 158-195 (QTALLAERPLCAPRLLDHFICELPALLKLACGGDGDTT) are Extracellular-facing. A helical membrane pass occupies residues 196-219 (ENQMFAARVVILLLPFAVILASYG). The Cytoplasmic segment spans residues 220-236 (AVARAVCCMRFSGGRRR). The helical transmembrane segment at 237–259 (AVGTCGSHLTAVCLFYGSAIYTY) threads the bilayer. Topologically, residues 260–272 (LQPAQRYNQARGK) are extracellular. Residues 273–292 (FVSLFYTVVTPALNPLIYTL) traverse the membrane as a helical segment. The Cytoplasmic segment spans residues 293–315 (RNKKVKGAARRLLRSLGRGQAGQ).

The protein belongs to the G-protein coupled receptor 1 family.

Its subcellular location is the cell membrane. Functionally, odorant receptor. This Homo sapiens (Human) protein is Putative olfactory receptor 2I1.